Consider the following 369-residue polypeptide: Peptide chain release factor 2 (369 aa).

At Gln251 the chain carries N5-methylglutamine.

Belongs to the prokaryotic/mitochondrial release factor family. In terms of processing, methylated by PrmC. Methylation increases the termination efficiency of RF2.

It is found in the cytoplasm. In terms of biological role, peptide chain release factor 2 directs the termination of translation in response to the peptide chain termination codons UGA and UAA. The chain is Peptide chain release factor 2 (prfB) from Chlamydia muridarum (strain MoPn / Nigg).